We begin with the raw amino-acid sequence, 261 residues long: Ribosomal RNA small subunit methyltransferase J (261 aa).

Residues R109 to D110, E125 to R126, and D179 each bind S-adenosyl-L-methionine.

Belongs to the methyltransferase superfamily. RsmJ family.

The protein localises to the cytoplasm. It catalyses the reaction guanosine(1516) in 16S rRNA + S-adenosyl-L-methionine = N(2)-methylguanosine(1516) in 16S rRNA + S-adenosyl-L-homocysteine + H(+). Specifically methylates the guanosine in position 1516 of 16S rRNA. In Pseudomonas aeruginosa (strain UCBPP-PA14), this protein is Ribosomal RNA small subunit methyltransferase J.